The chain runs to 80 residues: MKPSGLALAFLVVFMMAIMYNSVQAAAIADADAEAEAIAKIKWGKIFKKGGKLIGKTALEAAANAAASEAISAMASQNEK.

Residues 1–25 (MKPSGLALAFLVVFMMAIMYNSVQA) form the signal peptide. Residues 26–39 (AAIADADAEAEAIA) constitute a propeptide that is removed on maturation.

This sequence belongs to the formicidae venom precursor-01 superfamily. Truncated sequences of this peptide have also been found in the venom. It is possible they have been cleaved in the venom. Expressed by the venom gland.

The protein localises to the secreted. Cationic amphipathic alpha-helical peptide with antimicrobial activities against E.coli (MIC=3.1 uM), S.aureus (MIC=25 uM), and S.cerevisiae (MIC=50 uM). Also shows histamine-releasing activity (37.5% at 10 uM). Does not show hemolytic activity, even at 50 uM. This chain is U-poneritoxin(01)-Om3a, found in Odontomachus monticola (Trap-jaw ant).